A 416-amino-acid chain; its full sequence is Serine hydroxymethyltransferase (416 aa).

Residues L118 and 122–124 (GHL) contribute to the (6S)-5,6,7,8-tetrahydrofolate site. K226 carries the post-translational modification N6-(pyridoxal phosphate)lysine. Residues E242 and 350-352 (SPF) each bind (6S)-5,6,7,8-tetrahydrofolate.

The protein belongs to the SHMT family. As to quaternary structure, homodimer. Requires pyridoxal 5'-phosphate as cofactor.

It localises to the cytoplasm. The catalysed reaction is (6R)-5,10-methylene-5,6,7,8-tetrahydrofolate + glycine + H2O = (6S)-5,6,7,8-tetrahydrofolate + L-serine. It functions in the pathway one-carbon metabolism; tetrahydrofolate interconversion. Its pathway is amino-acid biosynthesis; glycine biosynthesis; glycine from L-serine: step 1/1. In terms of biological role, catalyzes the reversible interconversion of serine and glycine with tetrahydrofolate (THF) serving as the one-carbon carrier. This reaction serves as the major source of one-carbon groups required for the biosynthesis of purines, thymidylate, methionine, and other important biomolecules. Also exhibits THF-independent aldolase activity toward beta-hydroxyamino acids, producing glycine and aldehydes, via a retro-aldol mechanism. The chain is Serine hydroxymethyltransferase from Helicobacter pylori (strain ATCC 700392 / 26695) (Campylobacter pylori).